Here is a 175-residue protein sequence, read N- to C-terminus: Peptide deformylase (175 aa).

Residues Cys99 and His141 each coordinate Fe cation. Glu142 is a catalytic residue. His145 is a Fe cation binding site.

Belongs to the polypeptide deformylase family. The cofactor is Fe(2+).

It catalyses the reaction N-terminal N-formyl-L-methionyl-[peptide] + H2O = N-terminal L-methionyl-[peptide] + formate. Removes the formyl group from the N-terminal Met of newly synthesized proteins. Requires at least a dipeptide for an efficient rate of reaction. N-terminal L-methionine is a prerequisite for activity but the enzyme has broad specificity at other positions. The polypeptide is Peptide deformylase (Rickettsia canadensis (strain McKiel)).